The primary structure comprises 462 residues: Lysyl endopeptidase (462 aa).

A signal peptide spans 1-24 (MHKRTYLNACLVLALAAGASQALA). The propeptide occupies 25-211 (APGASEMAGD…VSYFADSLYK (187 aa)). Disulfide bonds link cysteine 224–cysteine 435, cysteine 230–cysteine 305, and cysteine 262–cysteine 284. Active-site charge relay system residues include histidine 283, aspartate 333, and serine 409.

It belongs to the peptidase S1 family. Post-translationally, experiments performed in E.coli. Processing of pro-endopeptidase to mature endopeptidase is probably autocatalytic, as mutations in the probable active site residues prevent processing, and purified inactive pro-endopeptidase disappears in the presence of active endopeptidase.

The protein resides in the secreted. It catalyses the reaction Preferential cleavage: Lys-|-Xaa, including Lys-|-Pro.. Its function is as follows. Lysine-specific endoprotease. Involved in corneal virulence. The protein is Lysyl endopeptidase (prpL) of Pseudomonas aeruginosa (strain ATCC 15692 / DSM 22644 / CIP 104116 / JCM 14847 / LMG 12228 / 1C / PRS 101 / PAO1).